The chain runs to 472 residues: MNAVTDLKQDYIVADIGLAGWGRKEIAIAETEMPGLMAIRDEFAAAQPLKGARIAGSLHMTIQTAVLIETLKALGADVRWASCNIFSTQDHAAAAIAASGTPVFAFKGESLKEYWDFTHRIFDWADGGTPNMILDDGGDATLLLHLGARAEKDASLIAKPTSEEETFLFAAIKEKLAKDSTWYSRNLAAIRGVTEETTTGVHRLYQMAQKGELKFPAINVNDSVTKSKFDNLYGCRESLVDGIKRATDVMIAGKIAVVAGYGDVGKGSAQALRALSAQVWVTEIDPICALQAAMEGYRVVTMDYAAEHGDIFVTCTGNYHVITHDHMAKMKDQAIVCNIGHFDNEIDIASVEKYEWDEIKPQVDHVKFPDGKKIIILAKGRLVNLGCATGHPSYVMSSSFANQTIAQIELWAERDSGKYPVGVYVLPKHLDEKVARLQLRKLNAQLTELTEQQAAYIGVKKEGPYKADHYRY.

3 residues coordinate substrate: Thr61, Asp136, and Glu196. An NAD(+)-binding site is contributed by 197-199; sequence TTT. Residues Lys226 and Asp230 each contribute to the substrate site. NAD(+) is bound by residues Asn231, 260-265, Glu283, Asn318, 339-341, and Asn384; these read GYGDVG and IGH.

It belongs to the adenosylhomocysteinase family. NAD(+) serves as cofactor.

It localises to the cytoplasm. It carries out the reaction S-adenosyl-L-homocysteine + H2O = L-homocysteine + adenosine. Its pathway is amino-acid biosynthesis; L-homocysteine biosynthesis; L-homocysteine from S-adenosyl-L-homocysteine: step 1/1. Functionally, may play a key role in the regulation of the intracellular concentration of adenosylhomocysteine. The chain is Adenosylhomocysteinase from Cupriavidus metallidurans (strain ATCC 43123 / DSM 2839 / NBRC 102507 / CH34) (Ralstonia metallidurans).